Here is a 708-residue protein sequence, read N- to C-terminus: Wall-associated receptor kinase-like 14 (708 aa).

Positions 1-42 (MLRSIFDFNQRSTKMVMISHKLDLILVFIIVIGGSIFRRVSA) are cleaved as a signal peptide. Asparagine 43, asparagine 88, asparagine 101, asparagine 131, asparagine 158, asparagine 167, and asparagine 184 each carry an N-linked (GlcNAc...) asparagine glycan. Topologically, residues 43–285 (NFTVPCNGRC…WRHCRSNLIT (243 aa)) are extracellular. A helical transmembrane segment spans residues 286–306 (IVGGTVGGAFLLAALAFFFFC). The Cytoplasmic portion of the chain corresponds to 307–708 (KRRRSTPLRS…TNTLLGNIPR (402 aa)). The 282-residue stretch at 348–629 (FSEKQKLGIG…LEQIRLSGWI (282 aa)) folds into the Protein kinase domain. Residues 354 to 362 (LGIGAYGTV) and lysine 376 each bind ATP. Catalysis depends on aspartate 472, which acts as the Proton acceptor. Disordered regions lie at residues 636–659 (SPAG…SIGS) and 686–708 (VQDP…NIPR). The span at 643 to 652 (SSDRGSERSV) shows a compositional bias: basic and acidic residues. The span at 692–708 (SAQSSPSTNTLLGNIPR) shows a compositional bias: polar residues.

The protein belongs to the protein kinase superfamily. Ser/Thr protein kinase family.

It is found in the membrane. It carries out the reaction L-seryl-[protein] + ATP = O-phospho-L-seryl-[protein] + ADP + H(+). The enzyme catalyses L-threonyl-[protein] + ATP = O-phospho-L-threonyl-[protein] + ADP + H(+). Functionally, serine/threonine-protein kinase that may function as a signaling receptor of extracellular matrix component. The protein is Wall-associated receptor kinase-like 14 (WAKL14) of Arabidopsis thaliana (Mouse-ear cress).